Here is a 280-residue protein sequence, read N- to C-terminus: 3-methyl-2-oxobutanoate hydroxymethyltransferase (280 aa).

Mg(2+) is bound by residues aspartate 61 and aspartate 100. 3-methyl-2-oxobutanoate-binding positions include 61–62 (DS), aspartate 100, and lysine 130. Position 132 (glutamate 132) interacts with Mg(2+). Glutamate 198 (proton acceptor) is an active-site residue.

Belongs to the PanB family. Homodecamer; pentamer of dimers. The cofactor is Mg(2+).

The protein localises to the cytoplasm. It catalyses the reaction 3-methyl-2-oxobutanoate + (6R)-5,10-methylene-5,6,7,8-tetrahydrofolate + H2O = 2-dehydropantoate + (6S)-5,6,7,8-tetrahydrofolate. The protein operates within cofactor biosynthesis; (R)-pantothenate biosynthesis; (R)-pantoate from 3-methyl-2-oxobutanoate: step 1/2. Its function is as follows. Catalyzes the reversible reaction in which hydroxymethyl group from 5,10-methylenetetrahydrofolate is transferred onto alpha-ketoisovalerate to form ketopantoate. The protein is 3-methyl-2-oxobutanoate hydroxymethyltransferase of Mycolicibacterium vanbaalenii (strain DSM 7251 / JCM 13017 / BCRC 16820 / KCTC 9966 / NRRL B-24157 / PYR-1) (Mycobacterium vanbaalenii).